Reading from the N-terminus, the 131-residue chain is Small ribosomal subunit protein uS8 (131 aa).

It belongs to the universal ribosomal protein uS8 family. In terms of assembly, part of the 30S ribosomal subunit. Contacts proteins S5 and S12.

In terms of biological role, one of the primary rRNA binding proteins, it binds directly to 16S rRNA central domain where it helps coordinate assembly of the platform of the 30S subunit. This is Small ribosomal subunit protein uS8 from Chlorobium phaeovibrioides (strain DSM 265 / 1930) (Prosthecochloris vibrioformis (strain DSM 265)).